Consider the following 90-residue polypeptide: Probable Fe(2+)-trafficking protein (90 aa).

It belongs to the Fe(2+)-trafficking protein family.

Could be a mediator in iron transactions between iron acquisition and iron-requiring processes, such as synthesis and/or repair of Fe-S clusters in biosynthetic enzymes. The chain is Probable Fe(2+)-trafficking protein from Halorhodospira halophila (strain DSM 244 / SL1) (Ectothiorhodospira halophila (strain DSM 244 / SL1)).